Consider the following 92-residue polypeptide: Small ribosomal subunit protein uS19 (92 aa).

It belongs to the universal ribosomal protein uS19 family.

In terms of biological role, protein S19 forms a complex with S13 that binds strongly to the 16S ribosomal RNA. The chain is Small ribosomal subunit protein uS19 from Photobacterium profundum (strain SS9).